A 467-amino-acid chain; its full sequence is Probable multidrug resistance protein NorM (467 aa).

Helical transmembrane passes span 20–42, 57–79, 107–129, 144–163, 170–192, 202–224, 250–272, 292–314, 326–348, 368–390, 403–425, and 429–451; these read HFRA…LAIN, LAAI…GFAN, VVLL…LLFA, HIAQ…RAFL, GVIL…VLIF, IFGA…IGYI, VVHL…TVAS, FASI…IGLA, AAIA…FALF, LAFA…LQAI, IPMI…AFAF, and FGGV…LLNW.

Belongs to the multi antimicrobial extrusion (MATE) (TC 2.A.66.1) family.

The protein resides in the cell inner membrane. Multidrug efflux pump. In Rhizobium meliloti (strain 1021) (Ensifer meliloti), this protein is Probable multidrug resistance protein NorM (norM).